Consider the following 138-residue polypeptide: Large ribosomal subunit protein uL16 (138 aa).

Basic residues predominate over residues 1 to 15 (MLSPRKVKYRKKQRG). Residues 1–21 (MLSPRKVKYRKKQRGRLSGEA) form a disordered region.

This sequence belongs to the universal ribosomal protein uL16 family. Part of the 50S ribosomal subunit.

Binds 23S rRNA and is also seen to make contacts with the A and possibly P site tRNAs. The polypeptide is Large ribosomal subunit protein uL16 (Borrelia duttonii (strain Ly)).